The sequence spans 78 residues: Translational regulator CsrA (78 aa).

It belongs to the CsrA/RsmA family. In terms of assembly, homodimer; the beta-strands of each monomer intercalate to form a hydrophobic core, while the alpha-helices form wings that extend away from the core.

It is found in the cytoplasm. In terms of biological role, a translational regulator that binds mRNA to regulate translation initiation and/or mRNA stability. Usually binds in the 5'-UTR at or near the Shine-Dalgarno sequence preventing ribosome-binding, thus repressing translation. Its main target seems to be the major flagellin gene, while its function is anatagonized by FliW. The polypeptide is Translational regulator CsrA (Natranaerobius thermophilus (strain ATCC BAA-1301 / DSM 18059 / JW/NM-WN-LF)).